A 442-amino-acid polypeptide reads, in one-letter code: tRNA modification GTPase MnmE (442 aa).

(6S)-5-formyl-5,6,7,8-tetrahydrofolate-binding residues include arginine 27, glutamate 84, and lysine 124. The region spanning 221–366 (GLHVVIVGAP…LLDALQAFAE (146 aa)) is the TrmE-type G domain. Residues 231 to 236 (NAGKSS), 250 to 256 (SKEAGTT), and 275 to 278 (DTAG) contribute to the GTP site. Residues serine 235 and threonine 256 each coordinate Mg(2+). Position 442 (lysine 442) interacts with (6S)-5-formyl-5,6,7,8-tetrahydrofolate.

It belongs to the TRAFAC class TrmE-Era-EngA-EngB-Septin-like GTPase superfamily. TrmE GTPase family. In terms of assembly, homodimer. Heterotetramer of two MnmE and two MnmG subunits. It depends on K(+) as a cofactor.

It localises to the cytoplasm. In terms of biological role, exhibits a very high intrinsic GTPase hydrolysis rate. Involved in the addition of a carboxymethylaminomethyl (cmnm) group at the wobble position (U34) of certain tRNAs, forming tRNA-cmnm(5)s(2)U34. The protein is tRNA modification GTPase MnmE of Brucella suis biovar 1 (strain 1330).